The primary structure comprises 478 residues: V-type ATP synthase beta chain (478 aa).

Belongs to the ATPase alpha/beta chains family.

In terms of biological role, produces ATP from ADP in the presence of a proton gradient across the membrane. The V-type beta chain is a regulatory subunit. The protein is V-type ATP synthase beta chain of Thermus thermophilus (strain ATCC BAA-163 / DSM 7039 / HB27).